Here is a 453-residue protein sequence, read N- to C-terminus: Pup--protein ligase (453 aa).

Glu9 contacts Mg(2+). Arg53 lines the ATP pocket. Tyr55 serves as a coordination point for Mg(2+). Asp57 serves as the catalytic Proton acceptor. Glu63 is a Mg(2+) binding site. Thr66 and Trp420 together coordinate ATP.

It belongs to the Pup ligase/Pup deamidase family. Pup-conjugating enzyme subfamily.

The catalysed reaction is ATP + [prokaryotic ubiquitin-like protein]-L-glutamate + [protein]-L-lysine = ADP + phosphate + N(6)-([prokaryotic ubiquitin-like protein]-gamma-L-glutamyl)-[protein]-L-lysine.. It participates in protein degradation; proteasomal Pup-dependent pathway. It functions in the pathway protein modification; protein pupylation. Its function is as follows. Catalyzes the covalent attachment of the prokaryotic ubiquitin-like protein modifier Pup to the proteasomal substrate proteins, thereby targeting them for proteasomal degradation. This tagging system is termed pupylation. The ligation reaction involves the side-chain carboxylate of the C-terminal glutamate of Pup and the side-chain amino group of a substrate lysine. The chain is Pup--protein ligase from Kineococcus radiotolerans (strain ATCC BAA-149 / DSM 14245 / SRS30216).